The chain runs to 258 residues: Small ribosomal subunit protein uS2 (258 aa).

Residues 226 to 258 (KQGQDDEETLEVDFKENADGSEEIVSAEENPED) form a disordered region. Residues 244–258 (DGSEEIVSAEENPED) show a composition bias toward acidic residues.

This sequence belongs to the universal ribosomal protein uS2 family.

This Lactobacillus acidophilus (strain ATCC 700396 / NCK56 / N2 / NCFM) protein is Small ribosomal subunit protein uS2.